The following is a 1303-amino-acid chain: Ninein-like protein (1303 aa).

EF-hand domains follow at residues Arg-8–Asp-43 and Arg-61–Arg-77. The tract at residues Thr-107–Asp-135 is disordered. 2 consecutive EF-hand domains span residues Val-203–Lys-238 and Leu-240–His-275. Asp-253, Asp-255, Asp-257, Lys-259, and Glu-264 together coordinate Ca(2+). Residues Glu-464–Gln-590 are a coiled coil. Polar residues predominate over residues Ser-592–Glu-617. A disordered region spans residues Ser-592–Arg-634. 3 coiled-coil regions span residues Glu-660–Glu-791, Leu-821–Arg-876, and Ser-919–Gln-1146. The segment at Glu-1156–Gln-1181 is disordered. A compositionally biased stretch (polar residues) spans Gly-1159–Glu-1175. Residues Gln-1202–Lys-1278 are a coiled coil.

The protein localises to the cytoplasm. Its subcellular location is the cytoskeleton. It localises to the microtubule organizing center. It is found in the centrosome. Functionally, required for the intracellular transport of organelles and vesicles, and is essential for the photoreceptor's outer segments formation, maintenance and function. The sequence is that of Ninein-like protein (Ninl) from Danio rerio (Zebrafish).